A 463-amino-acid chain; its full sequence is Glutamate--tRNA ligase (463 aa).

The 'HIGH' region motif lies at 10 to 20; that stretch reads PSPTGHLHIGG. Residues 236-240 carry the 'KMSKS' region motif; that stretch reads KLSKR. Lys239 provides a ligand contact to ATP.

This sequence belongs to the class-I aminoacyl-tRNA synthetase family. Glutamate--tRNA ligase type 1 subfamily. As to quaternary structure, monomer.

Its subcellular location is the cytoplasm. It catalyses the reaction tRNA(Glu) + L-glutamate + ATP = L-glutamyl-tRNA(Glu) + AMP + diphosphate. Catalyzes the attachment of glutamate to tRNA(Glu) in a two-step reaction: glutamate is first activated by ATP to form Glu-AMP and then transferred to the acceptor end of tRNA(Glu). The polypeptide is Glutamate--tRNA ligase (Nitratidesulfovibrio vulgaris (strain ATCC 29579 / DSM 644 / CCUG 34227 / NCIMB 8303 / VKM B-1760 / Hildenborough) (Desulfovibrio vulgaris)).